Consider the following 525-residue polypeptide: Serine/threonine protein phosphatase 2A 55 kDa regulatory subunit B beta isoform (525 aa).

Residues 1-31 are disordered; that stretch reads MDPFSKSPDDDDLRPEAEAARRPQPQPQPRE. WD repeat units lie at residues 48-87 and 124-165; these read QEVDIISAIEFDKSGDHLATGDRGGRVVLFERTDSRDSAS and EIEE…VKRI. The segment at 169–191 is disordered; sequence NLNTSQSSGNGTTSSSSSSSSRA. Positions 171–189 are enriched in low complexity; sequence NTSQSSGNGTTSSSSSSSS. 4 WD repeats span residues 244–282, 293–333, 352–390, and 495–525; these read AHDYHINSISNNSDGETYISADDLRINLWNLEISNQSFN, DLTE…LCDN, EIIASVSDIKFARDGRHILSRDYMTLKLWDINMDSGPVA, and DLSTKLLHLAWHPTENSIACAAANSLYMYYA.

This sequence belongs to the phosphatase 2A regulatory subunit B family. In terms of assembly, PP2A consists of a common heteromeric enzyme, composed of a catalytic subunit (subunits C), a constant regulatory subunit (subunit A), and a variety of regulatory subunits such as subunits B (the R2/B/PR55/B55, R3/B''/PR72/PR130/PR59 and R5/B'/B56 families).

The B regulatory subunit may modulate substrate selectivity and catalytic activity, and may also direct the localization of the catalytic enzyme to a particular subcellular compartment. In Oryza sativa subsp. indica (Rice), this protein is Serine/threonine protein phosphatase 2A 55 kDa regulatory subunit B beta isoform.